Here is a 392-residue protein sequence, read N- to C-terminus: Cell division protein DivIB (392 aa).

The interval 1–87 (MSEKDNNLTP…ETQSSEAPIE (87 aa)) is disordered. The Cytoplasmic portion of the chain corresponds to 1–131 (MSEKDNNLTP…KGSAPLLKKM (131 aa)). A compositionally biased stretch (basic and acidic residues) spans 14–32 (KHLEYQKRKAEEAKKEKKA). Over residues 58–76 (TRDEAESAELLEEGFETNN) the composition is skewed to acidic residues. A helical transmembrane segment spans residues 132–152 (WPALAIVVLVFVGSLYLISPL). The POTRA domain maps to 153-224 (SKISTFSVSG…NRFEAIVKEH (72 aa)). Residues 153-392 (SKISTFSVSG…TAQSTTTSSN (240 aa)) are Extracellular-facing. Positions 368 to 392 (ISAQNAKKTDASSENTAQSTTTSSN) are disordered.

The protein belongs to the FtsQ/DivIB family. DivIB subfamily.

The protein localises to the cell membrane. Its function is as follows. Cell division protein that may be involved in stabilizing or promoting the assembly of the division complex. In Lactococcus lactis subsp. lactis (strain IL1403) (Streptococcus lactis), this protein is Cell division protein DivIB.